We begin with the raw amino-acid sequence, 194 residues long: Ras-related protein Rab-22A (194 aa).

Residue 12–20 (GDTGVGKSS) coordinates GTP. Positions 34–42 (INPTIGASF) match the Effector region motif. GTP-binding positions include 60–64 (DTAGQ), 118–121 (NKCD), and 148–150 (SAK). A disordered region spans residues 174-194 (PSGGKGFKLRRQPSEPKRSCC). Basic and acidic residues predominate over residues 185–194 (QPSEPKRSCC). 2 S-geranylgeranyl cysteine lipidation sites follow: C193 and C194.

This sequence belongs to the small GTPase superfamily. Rab family. As to quaternary structure, interacts directly with ZFYVE20. Binds EEA1. Interacts (in its GTP-bound form) with RABGEF1. Interacts (in its GTP-bound form) with RINL.

The protein resides in the endosome membrane. The protein localises to the cell membrane. It is found in the early endosome. It localises to the late endosome. Its subcellular location is the cell projection. The protein resides in the ruffle. The protein localises to the cytoplasmic vesicle. It is found in the phagosome. It localises to the phagosome membrane. Plays a role in endocytosis and intracellular protein transport. Mediates trafficking of TF from early endosomes to recycling endosomes. Required for NGF-mediated endocytosis of NTRK1, and subsequent neurite outgrowth. Binds GTP and GDP and has low GTPase activity. Alternates between a GTP-bound active form and a GDP-bound inactive form. The chain is Ras-related protein Rab-22A (RAB22A) from Homo sapiens (Human).